A 179-amino-acid polypeptide reads, in one-letter code: CASP-like protein 5A2 (179 aa).

The segment at 1–24 (MNVSHASVHPVEDPPAAATEVENP) is disordered. Residues 1–38 (MNVSHASVHPVEDPPAAATEVENPPRVRMDDMEGMPGT) lie on the Cytoplasmic side of the membrane. The chain crosses the membrane as a helical span at residues 39–59 (LLGLALRFFQFLFAAAALCVM). The Extracellular segment spans residues 60–70 (ASTSDFPSVTA). The chain crosses the membrane as a helical span at residues 71–91 (FCYLVAATGLQSLWSLALAMV). Topologically, residues 92–115 (DVYAIMVKRSLQNRRLVSLFAIGD) are cytoplasmic. A helical membrane pass occupies residues 116-136 (GVTSTLTFAAACASAGITVLI). Over 137 to 155 (DNDLNSCAQNHCVQFETST) the chain is Extracellular. A helical membrane pass occupies residues 156-176 (ALAFISWFAALPSFLFNFWSL). Topologically, residues 177-179 (ASR) are cytoplasmic.

The protein belongs to the Casparian strip membrane proteins (CASP) family. Homodimer and heterodimers.

The protein resides in the cell membrane. The polypeptide is CASP-like protein 5A2 (Arabidopsis thaliana (Mouse-ear cress)).